We begin with the raw amino-acid sequence, 317 residues long: Adenine deaminase (317 aa).

Positions 14, 16, and 194 each coordinate Zn(2+). Residue Glu-197 is the Proton donor of the active site. Residue Asp-275 coordinates Zn(2+). Substrate is bound at residue Asp-276.

It belongs to the metallo-dependent hydrolases superfamily. Adenosine and AMP deaminases family. Adenine deaminase type 2 subfamily. It depends on Zn(2+) as a cofactor.

The enzyme catalyses adenine + H2O + H(+) = hypoxanthine + NH4(+). Catalyzes the hydrolytic deamination of adenine to hypoxanthine. Plays an important role in the purine salvage pathway and in nitrogen catabolism. This chain is Adenine deaminase, found in Pseudomonas syringae pv. tomato (strain ATCC BAA-871 / DC3000).